A 315-amino-acid polypeptide reads, in one-letter code: MRLVFAGTPEPALPALRRLLDSPRHEMIAVLTRPDAASGRRGKPEPSPVAREALDRGIPVLRPARPNSPEFVAELAQLAPDCCAVVAYGALLRDELLAVPPHGWINLHFSLLPAWRGAAPVQAAIAAGDIITGASTFRIEPALDSGPIYGVVTEAIRPTDTAGELLARLAVSGAELLSATLDGIADSTLTPRPQPAEGVSIAPKITVEQARVRWDLPAPVVERRIRAVTPNPGAWTVISDLRIKLGPVRLGAASDLPAPPEPLPPGAIHVDRKSVWVGTGSDPVRLGQIQPPGKKFMNAVDWARGARLDPAARAT.

Position 110–113 (Ser110–Pro113) interacts with (6S)-5,6,7,8-tetrahydrofolate.

Belongs to the Fmt family.

It carries out the reaction L-methionyl-tRNA(fMet) + (6R)-10-formyltetrahydrofolate = N-formyl-L-methionyl-tRNA(fMet) + (6S)-5,6,7,8-tetrahydrofolate + H(+). In terms of biological role, attaches a formyl group to the free amino group of methionyl-tRNA(fMet). The formyl group appears to play a dual role in the initiator identity of N-formylmethionyl-tRNA by promoting its recognition by IF2 and preventing the misappropriation of this tRNA by the elongation apparatus. The polypeptide is Methionyl-tRNA formyltransferase (Mycolicibacterium paratuberculosis (strain ATCC BAA-968 / K-10) (Mycobacterium paratuberculosis)).